The sequence spans 67 residues: Amphipathic peptide Tx348 (67 aa).

The signal sequence occupies residues 1–23 (MKSQAFFLLFLVVLLLATTQSEA). At F33 the chain carries Phenylalanine amide. Residues 37-67 (SMRNMDTMKYLYDPSLSAADLKTLQKLMENY) constitute a propeptide that is removed on maturation.

Belongs to the non-disulfide-bridged peptide (NDBP) superfamily. Short antimicrobial peptide (group 4) family. Expressed by the venom gland.

The protein resides in the secreted. It is found in the target cell membrane. Its function is as follows. Amphipathic peptide that has antibacterial activities. The chain is Amphipathic peptide Tx348 from Buthus israelis (Israeli scorpion).